The sequence spans 125 residues: Fluoride-specific ion channel FluC (125 aa).

A run of 4 helical transmembrane segments spans residues 4 to 24 (LMLV…TVTA), 32 to 52 (AFPW…GLLV), 67 to 87 (LLLA…SLDV), and 100 to 120 (LAYV…GLWL). Na(+) contacts are provided by Gly75 and Thr78.

This sequence belongs to the fluoride channel Fluc/FEX (TC 1.A.43) family.

Its subcellular location is the cell inner membrane. It carries out the reaction fluoride(in) = fluoride(out). Its activity is regulated as follows. Na(+) is not transported, but it plays an essential structural role and its presence is essential for fluoride channel function. Functionally, fluoride-specific ion channel. Important for reducing fluoride concentration in the cell, thus reducing its toxicity. In Chelativorans sp. (strain BNC1), this protein is Fluoride-specific ion channel FluC.